A 319-amino-acid polypeptide reads, in one-letter code: Methionyl-tRNA formyltransferase (319 aa).

Position 114-117 (114-117) interacts with (6S)-5,6,7,8-tetrahydrofolate; that stretch reads SLLP.

The protein belongs to the Fmt family.

It catalyses the reaction L-methionyl-tRNA(fMet) + (6R)-10-formyltetrahydrofolate = N-formyl-L-methionyl-tRNA(fMet) + (6S)-5,6,7,8-tetrahydrofolate + H(+). Attaches a formyl group to the free amino group of methionyl-tRNA(fMet). The formyl group appears to play a dual role in the initiator identity of N-formylmethionyl-tRNA by promoting its recognition by IF2 and preventing the misappropriation of this tRNA by the elongation apparatus. This is Methionyl-tRNA formyltransferase from Acinetobacter baylyi (strain ATCC 33305 / BD413 / ADP1).